We begin with the raw amino-acid sequence, 309 residues long: MNGTYNTCGSSDLTWPPAIKLGFYAYLGVLLVLGLLLNSLALWVFCCRMQQWTETRIYMTNLAVADLCLLCTLPFVLHSLRDTSDTPLCQLSQGIYLTNRYMSISLVTAIAVDRYVAVRHPLRARGLRSPRQAAAVCAVLWVLVIGSLVARWLLGIQEGGFCFRSTRHNFNSMAFPLLGFYLPLAVVVFCSLKVVTALAQRPPTDVGQAEATRKAARMVWANLLVFVVCFLPLHVGLTVRLAVGWNACALLETIRRALYITSKLSDANCCLDAICYYYMAKEFQEASALAVAPSAKAHKSQDSLCVTLA.

Residues 1–24 are Extracellular-facing; sequence MNGTYNTCGSSDLTWPPAIKLGFY. N2 is a glycosylation site (N-linked (GlcNAc...) asparagine). Residues 25-45 form a helical membrane-spanning segment; it reads AYLGVLLVLGLLLNSLALWVF. Residues 46–56 are Cytoplasmic-facing; it reads CCRMQQWTETR. A helical membrane pass occupies residues 57 to 77; the sequence is IYMTNLAVADLCLLCTLPFVL. Over 78 to 90 the chain is Extracellular; sequence HSLRDTSDTPLCQ. Cysteines 89 and 162 form a disulfide. The chain crosses the membrane as a helical span at residues 91-112; it reads LSQGIYLTNRYMSISLVTAIAV. Residues 113–135 are Cytoplasmic-facing; it reads DRYVAVRHPLRARGLRSPRQAAA. The helical transmembrane segment at 136-156 threads the bilayer; that stretch reads VCAVLWVLVIGSLVARWLLGI. Residues 157–174 are Extracellular-facing; it reads QEGGFCFRSTRHNFNSMA. A helical membrane pass occupies residues 175–195; sequence FPLLGFYLPLAVVVFCSLKVV. The Cytoplasmic segment spans residues 196–218; that stretch reads TALAQRPPTDVGQAEATRKAARM. A helical membrane pass occupies residues 219-239; sequence VWANLLVFVVCFLPLHVGLTV. Topologically, residues 240-258 are extracellular; it reads RLAVGWNACALLETIRRAL. Residues 259–279 traverse the membrane as a helical segment; sequence YITSKLSDANCCLDAICYYYM. Topologically, residues 280–309 are cytoplasmic; it reads AKEFQEASALAVAPSAKAHKSQDSLCVTLA. S287 and S294 each carry phosphoserine. Residues S300 and S303 each carry the phosphoserine; by GRK5 and GRK6 modification. Residue T307 is modified to Phosphothreonine.

This sequence belongs to the G-protein coupled receptor 1 family. Interacts with GNA13. Interacts with ARRB2. In terms of processing, multiply phosphorylated in clusters of serines and threonines in the C-terminal tail. Phosphorylation of Ser-300 and Ser-303 is mediated by GRK5 and/or GRK6. As to expression, predominantly expressed in immune and gastrointestinal tissues.

The protein localises to the cell membrane. Its function is as follows. G-protein coupled receptor that binds to several ligands including the tryptophan metabolite kynurenic acid (KYNA), lysophosphatidic acid (LPA) or 5-hydroxyindoleacetic acid (5-HIAA) with high affinity, leading to rapid and transient activation of numerous intracellular signaling pathways. Plays a role in neutrophil recruitment to sites of inflammation and bacterial clearance through the major serotonin metabolite 5-HIAA that acts as a physiological ligand. Stimulates lipid metabolism, thermogenic, and anti-inflammatory gene expression in adipose tissue once activated by kynurenic acid. In macrophages, activation by lysophosphatidic acid promotes GPR35-induced signaling with a distinct transcriptional profile characterized by TNF production associated with ERK and NF-kappa-B activation. In turn, induces chemotaxis of macrophages. This is G-protein coupled receptor 35 (GPR35) from Homo sapiens (Human).